A 208-amino-acid polypeptide reads, in one-letter code: ATP-dependent Clp protease proteolytic subunit (208 aa).

Serine 111 acts as the Nucleophile in catalysis. Histidine 136 is an active-site residue.

It belongs to the peptidase S14 family. In terms of assembly, fourteen ClpP subunits assemble into 2 heptameric rings which stack back to back to give a disk-like structure with a central cavity, resembling the structure of eukaryotic proteasomes.

The protein resides in the cytoplasm. It catalyses the reaction Hydrolysis of proteins to small peptides in the presence of ATP and magnesium. alpha-casein is the usual test substrate. In the absence of ATP, only oligopeptides shorter than five residues are hydrolyzed (such as succinyl-Leu-Tyr-|-NHMec, and Leu-Tyr-Leu-|-Tyr-Trp, in which cleavage of the -Tyr-|-Leu- and -Tyr-|-Trp bonds also occurs).. Its function is as follows. Cleaves peptides in various proteins in a process that requires ATP hydrolysis. Has a chymotrypsin-like activity. Plays a major role in the degradation of misfolded proteins. This chain is ATP-dependent Clp protease proteolytic subunit, found in Vibrio campbellii (strain ATCC BAA-1116).